A 449-amino-acid polypeptide reads, in one-letter code: Allantoinase (449 aa).

Histidine 59, histidine 61, lysine 146, histidine 182, histidine 238, and aspartate 311 together coordinate Zn(2+). Position 146 is an N6-carboxylysine (lysine 146).

This sequence belongs to the metallo-dependent hydrolases superfamily. Allantoinase family. In terms of assembly, homotetramer. Zn(2+) serves as cofactor. In terms of processing, carboxylation allows a single lysine to coordinate two zinc ions.

The enzyme catalyses (S)-allantoin + H2O = allantoate + H(+). It participates in nitrogen metabolism; (S)-allantoin degradation; allantoate from (S)-allantoin: step 1/1. Catalyzes the conversion of allantoin (5-ureidohydantoin) to allantoic acid by hydrolytic cleavage of the five-member hydantoin ring. The polypeptide is Allantoinase (Deinococcus geothermalis (strain DSM 11300 / CIP 105573 / AG-3a)).